The primary structure comprises 543 residues: Myotubularin-related protein 9-like (543 aa).

The 379-residue stretch at 124–502 (AWHFHPPECY…QSLRLWQGLF (379 aa)) folds into the Myotubularin phosphatase domain.

It belongs to the protein-tyrosine phosphatase family. Non-receptor class myotubularin subfamily.

Functionally, probable pseudophosphatase. This chain is Myotubularin-related protein 9-like, found in Bos taurus (Bovine).